A 191-amino-acid chain; its full sequence is Corrinoid adenosyltransferase (191 aa).

Residues 10-18 (TRTGDNGTT), lysine 28, 140-145 (RRAERS), and asparagine 166 contribute to the ATP site.

It belongs to the Cob(I)alamin adenosyltransferase family.

The protein localises to the cytoplasm. It catalyses the reaction 2 cob(II)yrinate a,c diamide + reduced [electron-transfer flavoprotein] + 2 ATP = 2 adenosylcob(III)yrinate a,c-diamide + 2 triphosphate + oxidized [electron-transfer flavoprotein] + 3 H(+). It carries out the reaction 2 cob(II)alamin + reduced [electron-transfer flavoprotein] + 2 ATP = 2 adenosylcob(III)alamin + 2 triphosphate + oxidized [electron-transfer flavoprotein] + 3 H(+). It functions in the pathway cofactor biosynthesis; adenosylcobalamin biosynthesis; adenosylcobalamin from cob(II)yrinate a,c-diamide: step 2/7. This Mycobacterium leprae (strain TN) protein is Corrinoid adenosyltransferase.